The following is a 197-amino-acid chain: GTP cyclohydrolase-2 (197 aa).

50 to 54 (RIHSE) lines the GTP pocket. Residues cysteine 55, cysteine 66, and cysteine 68 each contribute to the Zn(2+) site. GTP is bound by residues glutamine 71, 93–95 (EGR), and threonine 115. The Proton acceptor role is filled by aspartate 127. Residue arginine 129 is the Nucleophile of the active site. GTP-binding residues include threonine 150 and lysine 155.

Belongs to the GTP cyclohydrolase II family. Zn(2+) serves as cofactor.

It carries out the reaction GTP + 4 H2O = 2,5-diamino-6-hydroxy-4-(5-phosphoribosylamino)-pyrimidine + formate + 2 phosphate + 3 H(+). It functions in the pathway cofactor biosynthesis; riboflavin biosynthesis; 5-amino-6-(D-ribitylamino)uracil from GTP: step 1/4. In terms of biological role, catalyzes the conversion of GTP to 2,5-diamino-6-ribosylamino-4(3H)-pyrimidinone 5'-phosphate (DARP), formate and pyrophosphate. The polypeptide is GTP cyclohydrolase-2 (Aeromonas hydrophila subsp. hydrophila (strain ATCC 7966 / DSM 30187 / BCRC 13018 / CCUG 14551 / JCM 1027 / KCTC 2358 / NCIMB 9240 / NCTC 8049)).